The chain runs to 432 residues: MEAEPSQPPNGSWPLGQNGSDVETSMATSLTFSSYYQHSSPVAAMFIAAYVLIFLLCMVGNTLVCFIVLKNRHMRTVTNMFILNLAVSDLLVGIFCMPTTLVDNLITGWPFDNATCKMSGLVQGMSVSASVFTLVAIAVERFRCIVHPFREKLTLRKALFTIAVIWALALLIMCPSAVTLTVTREEHHFMLDARNRSYPLYSCWEAWPEKGMRKVYTAVLFAHIYLVPLALIVVMYVRIARKLCQAPGPARDTEEAVAEGGRTSRRRARVVHMLVMVALFFTLSWLPLWVLLLLIDYGELSELQLHLLSVYAFPLAHWLAFFHSSANPIIYGYFNENFRRGFQAAFRAQLCWPPWAAHKQAYSERPNRLLRRRVVVDVQPSDSGLPSESGPSSGVPGPGRLPLRNGRVAHQDGPGEGPGCNHMPLTIPAWNI.

Residues 1 to 43 (MEAEPSQPPNGSWPLGQNGSDVETSMATSLTFSSYYQHSSPVA) are Extracellular-facing. Asn-10 and Asn-18 each carry an N-linked (GlcNAc...) asparagine glycan. The chain crosses the membrane as a helical span at residues 44 to 64 (AMFIAAYVLIFLLCMVGNTLV). Residues 65-80 (CFIVLKNRHMRTVTNM) are Cytoplasmic-facing. The chain crosses the membrane as a helical span at residues 81-101 (FILNLAVSDLLVGIFCMPTTL). Over 102–117 (VDNLITGWPFDNATCK) the chain is Extracellular. An N-linked (GlcNAc...) asparagine glycan is attached at Asn-113. Cys-116 and Cys-203 form a disulfide bridge. Residues 118 to 138 (MSGLVQGMSVSASVFTLVAIA) traverse the membrane as a helical segment. Residues 139–158 (VERFRCIVHPFREKLTLRKA) lie on the Cytoplasmic side of the membrane. A helical membrane pass occupies residues 159–179 (LFTIAVIWALALLIMCPSAVT). Topologically, residues 180-214 (LTVTREEHHFMLDARNRSYPLYSCWEAWPEKGMRK) are extracellular. A glycan (N-linked (GlcNAc...) asparagine) is linked at Asn-195. A helical membrane pass occupies residues 215 to 235 (VYTAVLFAHIYLVPLALIVVM). Topologically, residues 236-273 (YVRIARKLCQAPGPARDTEEAVAEGGRTSRRRARVVHM) are cytoplasmic. A helical membrane pass occupies residues 274 to 294 (LVMVALFFTLSWLPLWVLLLL). At 295–309 (IDYGELSELQLHLLS) the chain is on the extracellular side. Residues 310–330 (VYAFPLAHWLAFFHSSANPII) traverse the membrane as a helical segment. At 331–432 (YGYFNENFRR…MPLTIPAWNI (102 aa)) the chain is on the cytoplasmic side. Positions 380 to 406 (PSDSGLPSESGPSSGVPGPGRLPLRNG) are enriched in low complexity. Residues 380 to 422 (PSDSGLPSESGPSSGVPGPGRLPLRNGRVAHQDGPGEGPGCNH) are disordered.

Belongs to the G-protein coupled receptor 1 family. In terms of tissue distribution, expressed at high levels in the hypothalamus. Moderate levels found in the midbrain, thalamus, medulla oblongata, testis, eye, whole brain, cerebral cortex, striatum, hippocampus, cerebellum, optic nerve, placenta, spinal cord, pituitary gland and ovary.

The protein resides in the cell membrane. Receptor for NPAF (A-18-F-amide) and NPFF (F-8-F-amide) neuropeptides, also known as morphine-modulating peptides. Can also be activated by a variety of naturally occurring or synthetic FMRF-amide like ligands. This receptor mediates its action by association with G proteins that activate a phosphatidylinositol-calcium second messenger system. The polypeptide is Neuropeptide FF receptor 1 (Npffr1) (Rattus norvegicus (Rat)).